The sequence spans 111 residues: Cornifelin (111 aa).

This sequence belongs to the cornifelin family. Directly or indirectly cross-linked to CE proteins loricin and involucrin (IVL).

The protein localises to the cytoplasm. In terms of biological role, part of the insoluble cornified cell envelope (CE) of stratified squamous epithelia. The sequence is that of Cornifelin (Cnfn) from Mus musculus (Mouse).